A 361-amino-acid polypeptide reads, in one-letter code: Chorismate synthase (361 aa).

The segment covering 38–49 has biased composition (basic and acidic residues); it reads EKDMQHDLDRRR. Residues 38–58 form a disordered region; the sequence is EKDMQHDLDRRRPGTSKYTTQ. Arg48 is a binding site for NADP(+). Residues 125–127, 238–239, Gly278, 293–297, and Arg319 contribute to the FMN site; these read RSS, NA, and KPTSS.

It belongs to the chorismate synthase family. Homotetramer. It depends on FMNH2 as a cofactor.

The catalysed reaction is 5-O-(1-carboxyvinyl)-3-phosphoshikimate = chorismate + phosphate. The protein operates within metabolic intermediate biosynthesis; chorismate biosynthesis; chorismate from D-erythrose 4-phosphate and phosphoenolpyruvate: step 7/7. Functionally, catalyzes the anti-1,4-elimination of the C-3 phosphate and the C-6 proR hydrogen from 5-enolpyruvylshikimate-3-phosphate (EPSP) to yield chorismate, which is the branch point compound that serves as the starting substrate for the three terminal pathways of aromatic amino acid biosynthesis. This reaction introduces a second double bond into the aromatic ring system. The chain is Chorismate synthase from Photobacterium profundum (strain SS9).